A 307-amino-acid chain; its full sequence is Leucine-rich repeat-containing protein 59 (307 aa).

Met1 bears the N-acetylmethionine mark. An N-acetylthreonine; in Leucine-rich repeat-containing protein 59, N-terminally processed modification is found at Thr2. At 2 to 244 (TKAGSKGGNL…KPPPRKHTRS (243 aa)) the chain is on the cytoplasmic side. LRR repeat units follow at residues 10 to 31 (NLRD…NEVP), 40 to 62 (KATV…CGLT), 63 to 84 (HLVK…FGRL), 86 to 107 (NLQH…FAQL), and 109 to 128 (NLKW…AKVA). Ser23 and Ser25 each carry phosphoserine. Lys73 carries the post-translational modification N6-succinyllysine. Position 135 is an N6-acetyllysine (Lys135). A coiled-coil region spans residues 148–216 (MKAVQADQER…KASKREQEKK (69 aa)). The tract at residues 150–241 (AVQADQERER…RPRKPPPRKH (92 aa)) is disordered. The span at 154 to 221 (DQERERQRRL…EQEKKPKKEA (68 aa)) shows a compositional bias: basic and acidic residues. Residues 229–241 (SGSRPRKPPPRKH) show a composition bias toward basic residues. The helical transmembrane segment at 245-265 (WAVLKVLLLLLLLCVAGGLVV) threads the bilayer. Over 266 to 307 (CRVTGLHQQPLCTSVNTIYDNAVQGLRHHEILQWVLQTDSQQ) the chain is Lumenal.

As to quaternary structure, can form homodimers. Interacts with SGO1. Interacts with FGF1.

It is found in the microsome membrane. It localises to the endoplasmic reticulum membrane. The protein resides in the nucleus envelope. Its function is as follows. Required for nuclear import of FGF1, but not that of FGF2. Might regulate nuclear import of exogenous FGF1 by facilitating interaction with the nuclear import machinery and by transporting cytosolic FGF1 to, and possibly through, the nuclear pores. The protein is Leucine-rich repeat-containing protein 59 (Lrrc59) of Mus musculus (Mouse).